The sequence spans 377 residues: Dehydrogenase/reductase SDR family member 13 (377 aa).

A signal peptide spans 1–25; that stretch reads MEALLLGAGLLLGAYVLVYYNLVKA. NAD(+) is bound by residues Ser-46 and Ile-48. Ser-170 serves as a coordination point for substrate. Residues Tyr-197, Lys-201, and Ser-232 each contribute to the NAD(+) site. Tyr-197 serves as the catalytic Proton acceptor. Residues 309–377 are disordered; that stretch reads RLAGLGPGED…AKVEPEIQLS (69 aa). The segment covering 317–331 has biased composition (acidic residues); that stretch reads EDAEPDEDPQSEDSE. A compositionally biased stretch (low complexity) spans 347 to 357; that stretch reads SQPYPSPQSSP. Residues 368–377 show a composition bias toward basic and acidic residues; that stretch reads AKVEPEIQLS.

This sequence belongs to the short-chain dehydrogenases/reductases (SDR) family.

It localises to the secreted. Putative oxidoreductase. This chain is Dehydrogenase/reductase SDR family member 13, found in Homo sapiens (Human).